Here is a 473-residue protein sequence, read N- to C-terminus: Vasculin (473 aa).

Disordered stretches follow at residues 1–25, 45–169, and 191–342; these read MAQHDFAPAWLNFPTPPSSTKSSLN, RRHN…KSRA, and VGNL…QERD. Residue S49 is modified to Phosphoserine. R87 is subject to Omega-N-methylarginine. Positions 93 to 107 are enriched in low complexity; sequence GSSRSRSSIFHSGKS. The segment covering 119-133 has biased composition (basic and acidic residues); sequence ETGRKEDKRERKQFE. 2 stretches are compositionally biased toward polar residues: residues 194–204 and 251–286; these read LPSQPVKNGTG and AFKSTAKNFSPSTNSVKECNRSNSSSPVDKLNQQPR. 4 positions are modified to phosphoserine: S274, S276, S322, and S381. The span at 293 to 329 shows a compositional bias: basic and acidic residues; that stretch reads MRTDKKSEFLKALKRDRVEEEHEDESRAGSEKDDDSF. Residues 444 to 473 are disordered; the sequence is GPWKNSTFKPTTENDDTETSSSDTSDDDDV. Residues 456-473 show a composition bias toward acidic residues; it reads ENDDTETSSSDTSDDDDV.

The protein belongs to the vasculin family. Interacts with GTF2B, GTF2F2, RNA polymerase II and TBP.

The protein resides in the nucleus. Functionally, functions as a GC-rich promoter-specific transactivating transcription factor. This chain is Vasculin (GPBP1), found in Pongo abelii (Sumatran orangutan).